Here is a 366-residue protein sequence, read N- to C-terminus: Aminomethyltransferase (366 aa).

This sequence belongs to the GcvT family. The glycine cleavage system is composed of four proteins: P, T, L and H.

The enzyme catalyses N(6)-[(R)-S(8)-aminomethyldihydrolipoyl]-L-lysyl-[protein] + (6S)-5,6,7,8-tetrahydrofolate = N(6)-[(R)-dihydrolipoyl]-L-lysyl-[protein] + (6R)-5,10-methylene-5,6,7,8-tetrahydrofolate + NH4(+). Functionally, the glycine cleavage system catalyzes the degradation of glycine. This Bacillus cereus (strain ATCC 10987 / NRS 248) protein is Aminomethyltransferase.